A 283-amino-acid polypeptide reads, in one-letter code: Bis(5'-nucleosyl)-tetraphosphatase, symmetrical (283 aa).

This sequence belongs to the Ap4A hydrolase family.

It catalyses the reaction P(1),P(4)-bis(5'-adenosyl) tetraphosphate + H2O = 2 ADP + 2 H(+). In terms of biological role, hydrolyzes diadenosine 5',5'''-P1,P4-tetraphosphate to yield ADP. In Pseudomonas paraeruginosa (strain DSM 24068 / PA7) (Pseudomonas aeruginosa (strain PA7)), this protein is Bis(5'-nucleosyl)-tetraphosphatase, symmetrical.